The chain runs to 96 residues: Co-chaperonin GroES (96 aa).

Belongs to the GroES chaperonin family. In terms of assembly, heptamer of 7 subunits arranged in a ring. Interacts with the chaperonin GroEL.

The protein resides in the cytoplasm. Its function is as follows. Together with the chaperonin GroEL, plays an essential role in assisting protein folding. The GroEL-GroES system forms a nano-cage that allows encapsulation of the non-native substrate proteins and provides a physical environment optimized to promote and accelerate protein folding. GroES binds to the apical surface of the GroEL ring, thereby capping the opening of the GroEL channel. This is Co-chaperonin GroES from Geotalea uraniireducens (strain Rf4) (Geobacter uraniireducens).